The following is a 622-amino-acid chain: V-type ATP synthase subunit I 1 (622 aa).

8 helical membrane-spanning segments follow: residues 306–326, 328–348, 373–393, 428–448, 459–479, 485–505, 532–552, and 562–582; these read WVNL…YWEV, ISGF…ADAG, PAWC…ALVC, QMHV…LIVV, AEFG…NLIV, PLTG…FIFV, VFAD…GGAI, and PLFA…GHGL.

It belongs to the V-ATPase 116 kDa subunit family.

It localises to the cell membrane. Produces ATP from ADP in the presence of a proton gradient across the membrane. The chain is V-type ATP synthase subunit I 1 (atpI1) from Treponema pallidum (strain Nichols).